A 556-amino-acid polypeptide reads, in one-letter code: Formate--tetrahydrofolate ligase (556 aa).

65–72 (TPAGEGKT) is an ATP binding site.

Belongs to the formate--tetrahydrofolate ligase family.

It carries out the reaction (6S)-5,6,7,8-tetrahydrofolate + formate + ATP = (6R)-10-formyltetrahydrofolate + ADP + phosphate. It participates in one-carbon metabolism; tetrahydrofolate interconversion. The sequence is that of Formate--tetrahydrofolate ligase from Proteus mirabilis (strain HI4320).